Reading from the N-terminus, the 673-residue chain is ATP-dependent DNA helicase Rep (673 aa).

Residues 1 to 280 enclose the UvrD-like helicase ATP-binding domain; sequence MRLNPGQQQA…IKLEQNYRSS (280 aa). ATP-binding positions include 22–29 and Arg-278; that span reads AGAGSGKT. Positions 281 to 562 constitute a UvrD-like helicase C-terminal domain; it reads GRILKAANIL…QLMTLHASKG (282 aa).

Belongs to the helicase family. UvrD subfamily. In terms of assembly, homodimer in association with DNA.

It carries out the reaction Couples ATP hydrolysis with the unwinding of duplex DNA by translocating in the 3'-5' direction.. The enzyme catalyses ATP + H2O = ADP + phosphate + H(+). With respect to regulation, binding to DNA induces dimerization, which is required for DNA helicase activity. Helicase activity is stimulated by PriC. In terms of biological role, rep helicase is a single-stranded (ss)DNA-dependent ATPase involved in DNA replication; it can initiate unwinding at a nick in the DNA. It binds to ssDNA and acts in a progressive fashion along the DNA in the 3' to 5' direction. Binds double-stranded (ds)DNA with a 5' ss- but not 3' ss-extension and forked structures with either lagging or leading ssDNA. Part of the PriC-Rep pathway for restart of stalled replication forks, which reloads the DnaB replicative helicase on sites other than the origin of replication. The chain is ATP-dependent DNA helicase Rep from Escherichia coli (strain K12).